Reading from the N-terminus, the 245-residue chain is Geranylgeranylglyceryl phosphate synthase (245 aa).

Asp-20 and Ser-50 together coordinate Mg(2+). Residues 169-175 (YLEAGSG), 202-203 (GG), and 224-225 (GT) each bind sn-glycerol 1-phosphate.

This sequence belongs to the GGGP/HepGP synthase family. Group II subfamily. Mg(2+) serves as cofactor.

The protein resides in the cytoplasm. It carries out the reaction sn-glycerol 1-phosphate + (2E,6E,10E)-geranylgeranyl diphosphate = sn-3-O-(geranylgeranyl)glycerol 1-phosphate + diphosphate. Its pathway is membrane lipid metabolism; glycerophospholipid metabolism. Prenyltransferase that catalyzes the transfer of the geranylgeranyl moiety of geranylgeranyl diphosphate (GGPP) to the C3 hydroxyl of sn-glycerol-1-phosphate (G1P). This reaction is the first ether-bond-formation step in the biosynthesis of archaeal membrane lipids. In Ignicoccus hospitalis (strain KIN4/I / DSM 18386 / JCM 14125), this protein is Geranylgeranylglyceryl phosphate synthase.